The primary structure comprises 462 residues: L-seryl-tRNA(Sec) selenium transferase (462 aa).

Lysine 293 is subject to N6-(pyridoxal phosphate)lysine.

It belongs to the SelA family. Pyridoxal 5'-phosphate is required as a cofactor.

The protein resides in the cytoplasm. The enzyme catalyses L-seryl-tRNA(Sec) + selenophosphate + H(+) = L-selenocysteinyl-tRNA(Sec) + phosphate. The protein operates within aminoacyl-tRNA biosynthesis; selenocysteinyl-tRNA(Sec) biosynthesis; selenocysteinyl-tRNA(Sec) from L-seryl-tRNA(Sec) (bacterial route): step 1/1. Its function is as follows. Converts seryl-tRNA(Sec) to selenocysteinyl-tRNA(Sec) required for selenoprotein biosynthesis. The polypeptide is L-seryl-tRNA(Sec) selenium transferase (Clostridium botulinum (strain Loch Maree / Type A3)).